The sequence spans 123 residues: Putative membrane protein insertion efficiency factor (123 aa).

This sequence belongs to the UPF0161 family.

The protein localises to the cell inner membrane. Its function is as follows. Could be involved in insertion of integral membrane proteins into the membrane. This Beijerinckia indica subsp. indica (strain ATCC 9039 / DSM 1715 / NCIMB 8712) protein is Putative membrane protein insertion efficiency factor.